We begin with the raw amino-acid sequence, 86 residues long: Mu-theraphotoxin-Hhn1b 1 (86 aa).

The N-terminal stretch at 1-21 (MKASMFLALAGLALLFVVCYA) is a signal peptide. The propeptide occupies 22–49 (SESEEKEFSNELLSSVLAVDDNSKGEER). Intrachain disulfides connect Cys51/Cys66, Cys58/Cys73, and Cys65/Cys80. An Isoleucine amide modification is found at Ile84.

This sequence belongs to the neurotoxin 10 (Hwtx-1) family. 22 (Htx-4) subfamily. As to quaternary structure, monomer. In terms of tissue distribution, expressed by the venom gland.

It is found in the secreted. Neurotoxin that selectively inhibits neuronal tetrodotoxin-sensitive voltage-gated sodium channels (Nav) (IC(50)=44.6 nM). It is active on Nav1.2/SCN2A (IC(50)=22.4 nM), Nav1.6/SCN8A (IC(50)=50.1 nM) and Nav1.7/SCN9A (IC(50)=48.9 nM). It shows low affinity for lipid bilayers. In Cyriopagopus hainanus (Chinese bird spider), this protein is Mu-theraphotoxin-Hhn1b 1.